An 863-amino-acid polypeptide reads, in one-letter code: Axin-1 (863 aa).

The disordered stretch occupies residues 1 to 81 (MNVQEQGFPL…PEGSASPTPP (81 aa)). A Tankyrase-binding motif motif is present at residues 20-29 (APRPPVPGEE). Residues 34 to 61 (STDSRPVNHSFCSGKGTSIKSETSTATP) show a composition bias toward polar residues. Position 75 is a phosphoserine (serine 75). Phosphoserine; by CK1 is present on serine 77. The RGS domain maps to 88–211 (SLHSLLDDQD…LKSDIYLEYT (124 aa)). The tract at residues 209 to 338 (EYTRTGSESP…DADTLSLTDS (130 aa)) is interaction with TP53. Disordered stretches follow at residues 215-240 (SESP…YLPT), 249-268 (CDQD…SRLT), and 315-344 (ATSA…DGIP). At serine 217 the chain carries Phosphoserine. Acidic residues predominate over residues 249-258 (CDQDADEDDG). Positions 325–339 (SLSSDADTLSLTDSS) are enriched in low complexity. The tract at residues 348–432 (IRKQHRREMQ…EDGEMPSGPM (85 aa)) is interaction with GSK3B. The segment at 353-411 (RREMQESIQVNGRVPLPHIPRTYRMPKEIRVEPQKFAEELIHRLEAVQRTREAEEKLEE) is interaction with SIAH1. An interaction with beta-catenin region spans residues 433–501 (ASHKLPSVPA…SPDSGHVAKT (69 aa)). Serine 468 carries the post-translational modification Phosphoserine; by CK1. Residue threonine 480 is modified to Phosphothreonine; by GSK3-beta. Serine 485 carries the phosphoserine; by GSK3-beta modification. Phosphoserine occurs at positions 492 and 509. An interaction with RNF111 region spans residues 505–758 (GGTASGHGKH…PVLSVVPAVS (254 aa)). Residues 529 to 542 (HHRHVHHHVHHNSA) are compositionally biased toward basic residues. Disordered stretches follow at residues 529–624 (HHRH…DAEK) and 642–664 (HRKA…SRPL). The segment covering 543 to 554 (RPKEQMEAEVAR) has biased composition (basic and acidic residues). The segment at 572 to 790 (PRSYSENAGT…CDSIVVAYYF (219 aa)) is interaction with PPP2CA. Residues 575-584 (YSENAGTTLS) show a composition bias toward polar residues. The tract at residues 678–753 (AQLRNSVQPS…RPACAPVLSV (76 aa)) is interaction with HIPK2. Residues 781-863 (CDSIVVAYYF…KIIGKVEKVD (83 aa)) form the DIX domain. Residues lysine 858 and lysine 861 each participate in a glycyl lysine isopeptide (Lys-Gly) (interchain with G-Cter in SUMO) cross-link.

In terms of assembly, homodimer. Component of the beta-catenin destruction complex, containing at least CTNNB1, an axin and GSK3B, that regulates CTNNB1 protein levels through phosphorylation and ubiquitination. Interacts with GSK3B; the interaction hyperphosphorylates CTNNB1 leading to its ubiquitination and destruction. Interacts with DAXX; the interaction stimulates the interaction of DAXX with TP53, stimulates 'Ser-46' phosphorylation of TP53 and induces cell death on UV irradiation. Also interacts with APC, RNF111, SMAD6 and SMAD7. Interacts (via the C-terminal) with PPP1CA; the interaction dephosphorylates AXIN1 and regulates interaction with GSK3B. Interacts with PPP2CA; the interaction dephosphorylates AXIN1. Interacts with MDFI; the interaction decreases AXIN1-mediated JUN N-terminal kinase (JNK) activation. Interacts with MDFIC; the interaction inhibits beta-cateninin-mediated signaling and AXIN1-mediated JUN N-terminal kinase (JNK) activation. Binds ANKRD6, PIAS1, PIAS2, PIAS4, SUMO1, MAP3K1 and MAP3K4. Component of the AXIN1-HIPK2-TP53 complex. Interacts directly in the complex with TP53 and HIPK2. Interacts with DIXDC1; the interaction prevents interaction with MAP3K1. Interacts with AIDA; the interaction blocks the AXIN1-mediated JNK activation through disrupting AXIN1 homodimerization and Wnt signaling. Interacts with LRP5 (via its phosphorylated PPPSP motifs); the interaction is stimulated by WNT1 and GSK3B and activates beta-catenin signaling. Interacts with CTNNB1 (via the armadillo repeats 2-7). Interacts with MACF1. Found in a complex composed of MACF1, APC, AXIN1, CTNNB1 and GSK3B. Interacts with TNKS. Interacts with DAB2; the interaction is mutually exclusive with the AXIN1:PPP1CA interaction. Interacts with ZBED3 (via PPPSP motif); the interaction is direct, enhanced by protein kinase GSK3B and casein kinase CSNK1E activities and decreases GSK3B-induced beta-catenin serine and threonine phosphorylations. Interacts with WDR26. Interacts with GID8. Interacts with SIAH1 and SIAH2; both probably catalyze AXIN1 ubiquitination and subsequent proteasome-mediated ubiquitin-dependent degradation. Interaction with GSK3B and AXIN1 is competitive. Phosphorylation and dephosphorylation of AXIN1 regulates assembly and function of the beta-catenin complex. Phosphorylated by CK1 and GSK3B. Dephosphorylated by PPP1CA and PPP2CA. Phosphorylation by CK1 enhances binding of GSK3B to AXIN1. Also phosphorylated by CDK2 which regulates interaction with CTNBB1. Post-translationally, ADP-ribosylated by tankyrase TNKS and TNKS2. Poly-ADP-ribosylated protein is recognized by RNF146, followed by ubiquitination and subsequent activation of the Wnt signaling pathway. In terms of processing, ubiquitinated by RNF146 when poly-ADP-ribosylated, leading to its degradation and subsequent activation of the Wnt signaling pathway. Deubiquitinated by USP34, deubiquitinated downstream of beta-catenin stabilization step: deubiquitination is important for nuclear accumulation during Wnt signaling to positively regulate beta-catenin (CTNBB1)-mediated transcription. Sumoylation at Lys-858 and Lys-861 prevents ubiquitination and degradation. Sumoylation is required for AXIN1-mediated JNK activation. Ubiquitination by SIAH1 and SIAH2 induces its proteasomal degradation as part of the activation of the Wnt signaling pathway. In terms of tissue distribution, expressed in embryonic stem cells.

It is found in the cytoplasm. It localises to the nucleus. Its subcellular location is the cell membrane. The protein resides in the membrane. In terms of biological role, component of the beta-catenin destruction complex required for regulating CTNNB1 levels through phosphorylation and ubiquitination, and modulating Wnt-signaling. Controls dorsoventral patterning via two opposing effects; down-regulates CTNNB1 to inhibit the Wnt signaling pathway and ventralize embryos, but also dorsalizes embryos by activating a Wnt-independent JNK signaling pathway. In Wnt signaling, probably facilitates the phosphorylation of CTNNB1 and APC by GSK3B. Likely to function as a tumor suppressor. Facilitates the phosphorylation of TP53 by HIPK2 upon ultraviolet irradiation. Enhances TGF-beta signaling by recruiting the RNF111 E3 ubiquitin ligase and promoting the degradation of inhibitory SMAD7. Also a component of the AXIN1-HIPK2-TP53 complex which controls cell growth, apoptosis and development. The polypeptide is Axin-1 (Axin1) (Mus musculus (Mouse)).